The sequence spans 415 residues: MSFDINWSELVSDESLNESIKEFLDNQFQSISLPSFIDNLSVSDFSLGNSPPEITIRHIGDPFDDFYEDEGDDDEKERKNVYMQQGVSEDTNSSDDDEDDEYDGDRSNDLSIITEDPNIHTFTSEADRSRLASPPRPPLTDLRRSRASSDPFSLIMGNNNLNYMHNYNMNYVGLGNLNATGTHTGTDTPTNILNQNPYATLKSNPSSYYKNKDPSKFSGSDTHKNGFRLTSKEPCSTRGENDIQLIAEVKYNGDLHLELTVNLLVNYPSPNFISLPIKLHVTDLVIHSIITIAYLKNSVFFSFLCDVNDINSDYFTSSTQNSTPEHMGATNTGGNFVDYVSGPINRERIDIIKKVKIESEIGEAEQNALRNVGKVERFLVEQLRNIIRDEFAWPSWVCFDLNEDDDDESDDQEEN.

The region spanning 1 to 402 (MSFDINWSEL…WPSWVCFDLN (402 aa)) is the SMP-LTD domain. A disordered region spans residues 53–146 (EITIRHIGDP…PPLTDLRRSR (94 aa)). Composition is skewed to acidic residues over residues 62–75 (PFDDFYEDEGDDDE) and 92–103 (NSSDDDEDDEYD).

This sequence belongs to the MDM12 family. As to quaternary structure, component of the ER-mitochondria encounter structure (ERMES) or MDM complex, composed of MMM1, MDM10, MDM12 and MDM34. An MMM1 homodimer associates with one molecule of MDM12 on each side in a pairwise head-to-tail manner, and the SMP-LTD domains of MMM1 and MDM12 generate a continuous hydrophobic tunnel for phospholipid trafficking.

It localises to the mitochondrion outer membrane. The protein resides in the endoplasmic reticulum membrane. Its function is as follows. Component of the ERMES/MDM complex, which serves as a molecular tether to connect the endoplasmic reticulum (ER) and mitochondria. Components of this complex are involved in the control of mitochondrial shape and protein biogenesis, and function in nonvesicular lipid trafficking between the ER and mitochondria. MDM12 is required for the interaction of the ER-resident membrane protein MMM1 and the outer mitochondrial membrane-resident beta-barrel protein MDM10. The MDM12-MMM1 subcomplex functions in the major beta-barrel assembly pathway that is responsible for biogenesis of all mitochondrial outer membrane beta-barrel proteins, and acts in a late step after the SAM complex. The MDM10-MDM12-MMM1 subcomplex further acts in the TOM40-specific pathway after the action of the MDM12-MMM1 complex. Essential for establishing and maintaining the structure of mitochondria and maintenance of mtDNA nucleoids. The polypeptide is Mitochondrial distribution and morphology protein 12 (Debaryomyces hansenii (strain ATCC 36239 / CBS 767 / BCRC 21394 / JCM 1990 / NBRC 0083 / IGC 2968) (Yeast)).